Reading from the N-terminus, the 147-residue chain is Large ribosomal subunit protein uL15 (147 aa).

Positions methionine 1–proline 62 are disordered. Residues threonine 30–lysine 39 show a composition bias toward basic residues.

It belongs to the universal ribosomal protein uL15 family. As to quaternary structure, part of the 50S ribosomal subunit.

Functionally, binds to the 23S rRNA. In Pelobacter propionicus (strain DSM 2379 / NBRC 103807 / OttBd1), this protein is Large ribosomal subunit protein uL15.